Consider the following 486-residue polypeptide: Arginine deiminase (486 aa).

Residue Cys-476 is the Amidino-cysteine intermediate of the active site.

This sequence belongs to the arginine deiminase family.

Its subcellular location is the cytoplasm. It carries out the reaction L-arginine + H2O = L-citrulline + NH4(+). Its pathway is amino-acid degradation; L-arginine degradation via ADI pathway; carbamoyl phosphate from L-arginine: step 1/2. Involved in the arginine deiminase pathway of fermentative arginine utilization. This Halobacterium salinarum (strain ATCC 29341 / DSM 671 / R1) protein is Arginine deiminase (arcA).